Here is a 409-residue protein sequence, read N- to C-terminus: O-glucosyltransferase rumi (409 aa).

Residues 1–20 form the signal peptide; sequence MLINVVLIILLVGLNGKASG. 4 disulfides stabilise this stretch: C62/C73, C71/C376, C118/C124, and C280/C303. D149 functions as the Proton donor/acceptor in the catalytic mechanism. The interval 190–195 is interaction with the consensus sequence C-X-S-X-[PA]-C in peptide substrates; that stretch reads ATKLHP. UDP-alpha-D-glucose-binding positions include 227–231, R235, 274–276, and 292–296; these read RGSRT, VSF, and AASFR. A Prevents secretion from ER motif is present at residues 406–409; that stretch reads KDEL.

It belongs to the glycosyltransferase 90 family.

It is found in the endoplasmic reticulum lumen. It functions in the pathway protein modification; protein glycosylation. Its function is as follows. Protein O-glucosyltransferase. Catalyzes the reaction that attaches glucose through an O-glycosidic linkage to a conserved serine residue found in the consensus sequence C-X-S-X-[PA]-C in epidermal growth factor-like repeats. Regulates Notch signaling by glucosylating Notch in the ER, glucosylation is required for the correct folding and cleavage of Notch. The chain is O-glucosyltransferase rumi from Drosophila pseudoobscura pseudoobscura (Fruit fly).